The following is a 509-amino-acid chain: Oligo-1,6-glucosidase (509 aa).

The Nucleophile role is filled by D198. E254 (proton donor) is an active-site residue.

Belongs to the glycosyl hydrolase 13 family.

It is found in the cytoplasm. It carries out the reaction Hydrolysis of (1-&gt;6)-alpha-D-glucosidic linkages in some oligosaccharides produced from starch and glycogen by alpha-amylase, and in isomaltose.. This is Oligo-1,6-glucosidase (malL) from Bacillus sp. (strain F5).